The sequence spans 521 residues: RING-type E3 ubiquitin-protein ligase PPIL2 (521 aa).

The U-box domain occupies 35–108 (RRLPFDHCSL…GQYHCPVLYS (74 aa)). Residues 197–217 (LKNTNSETRETLQELYKEFKG) are a coiled coil. A Glycyl lysine isopeptide (Lys-Gly) (interchain with G-Cter in SUMO2) cross-link involves residue K216. The PPIase cyclophilin-type domain occupies 278–433 (KKGYVRLHTN…EEVLICTTTV (156 aa)). Over residues 447-462 (QERKKTQHQVDPEAKV) the composition is skewed to basic and acidic residues. The tract at residues 447–521 (QERKKTQHQV…SRGFGDFSSW (75 aa)) is disordered. A compositionally biased stretch (polar residues) spans 465 to 478 (SQPQPGNQGPQTYR). Position 483 is an N6-acetyllysine (K483).

It belongs to the cyclophilin-type PPIase family. PPIL2 subfamily. As to quaternary structure, component of the minor spliceosome, which splices U12-type introns. Within this complex, interacts with PRPF8/PRP8, EFTUD2/SNU114 and PLRG1. Interacts with isoform 2 of BSG. Interacts (via the PPIase cyclophilin-type domain) with CRNKL1; they may form a trimeric complex with HSP90.

Its subcellular location is the nucleus. The catalysed reaction is S-ubiquitinyl-[E2 ubiquitin-conjugating enzyme]-L-cysteine + [acceptor protein]-L-lysine = [E2 ubiquitin-conjugating enzyme]-L-cysteine + N(6)-ubiquitinyl-[acceptor protein]-L-lysine.. It functions in the pathway protein modification; protein ubiquitination. Its function is as follows. Has a ubiquitin-protein ligase activity acting as an E3 ubiquitin protein ligase or as an ubiquitin-ubiquitin ligase promoting elongation of ubiquitin chains on substrates. By mediating 'Lys-48'-linked polyubiquitination of proteins could target them for proteasomal degradation. May also function as a chaperone, playing a role in transport to the cell membrane of BSG/Basigin for instance. Probable inactive PPIase with no peptidyl-prolyl cis-trans isomerase activity. As a component of the minor spliceosome, involved in the splicing of U12-type introns in pre-mRNAs. The chain is RING-type E3 ubiquitin-protein ligase PPIL2 from Mus musculus (Mouse).